The following is a 904-amino-acid chain: MAASVENRQFSHIEAGLSRSFKPRSDSPVRGCNFPPPNSTNFQKKPNSTIFLDYSSSEDDDDDDEKNEYLQMIKKGNSELEPSVHDSRDEGTADNWIERNFSLIRLTGKHPFNSEPPLNRLMHHGFITPVPLHYVRNHGPVPKGTWDDWTVEVTGLVKRPMKFTMDQLVNEFPSRELPVTLVCAGNRRKEQNMVKQTIGFNWGAAAVSTTVWRGVPLRALLKRYGVFSKNKGALNVCFEGADVLPGGGGSKYGTSIKKEFAMDPARDIIIAYMQNGEKLAPDHGFPVRMIIPGFIGGRMVKWIKRIIVTTQESDSYYHFKDNRVLPPHVDAELANTEAWWYKPEYIINELNINSVITTPCHEEILPINAWTTQRPYTLRGYSYSGGGKKVTRVEVTLDGGETWQVCTLDHPEKPTKYGKYWCWCFWSLEVEVLDLLSAKEIAVRAWDETLNTQPEKLIWNVMGMMNNCWFRVKMNVCKPHKGEIGIVFEHPTQPGNQSGGWMAKERHLEISAEAPPTLKKSISTPFMNTASKMYSMSEVRKHSSADSAWIIVHGHIYDATRFLKDHPGGSDSILINAGTDCTEEFDAIHSDKAKKLLEEFRIGELLTTGYTSDSPGNSVHGSSSFSSFLAPIKELVPAQRSVALIPREKIPCKLIDKQSISPDVRKFRFALPSEDQVLGLPVGKHIFLCAVIDDKLCMRAYTPTSTIDEVGYFELVVKIYFKGIHPKFPNGGQMSQYLDSLQLGSFLDVKGPLGHIEYQGKGNFLVHGKQKFAKKLAMIAGGTGITPVYQVMQAILKDPEDDTEMYVVYANRTEDDILLKEELDSWAEKIPERVKVWYVVQDSIKEGWKYSLGFISEAILREHIPEPSHTTLALACGPPPMIQFAVNPNLEKMGYDIKDSLLVF.

2 stretches are compositionally biased toward polar residues: residues 1–10 (MAASVENRQF) and 39–50 (STNFQKKPNSTI). Positions 1 to 65 (MAASVENRQF…SSEDDDDDDE (65 aa)) are disordered. Over residues 56–65 (SSEDDDDDDE) the composition is skewed to acidic residues. A Mo-molybdopterin-binding site is contributed by C183. One can recognise a Cytochrome b5 heme-binding domain in the interval 531–606 (SKMYSMSEVR…LEEFRIGELL (76 aa)). Positions 566 and 589 each coordinate heme. One can recognise an FAD-binding FR-type domain in the interval 647 to 759 (REKIPCKLID…KGPLGHIEYQ (113 aa)). FAD is bound by residues 699–702 (RAYT), 716–720 (VVKIY), F721, F728, 733–735 (QMS), and T786.

The protein belongs to the nitrate reductase family. Homodimer. FAD is required as a cofactor. Heme serves as cofactor. It depends on Mo-molybdopterin as a cofactor.

It catalyses the reaction nitrite + NAD(+) + H2O = nitrate + NADH + H(+). Its activity is regulated as follows. Regulated by the nitrogen source and controlled by the circadian rhythm. Nitrate reductase is a key enzyme involved in the first step of nitrate assimilation in plants, fungi and bacteria. This chain is Nitrate reductase [NADH] 1 (NIA1), found in Nicotiana tabacum (Common tobacco).